The primary structure comprises 424 residues: Enolase (424 aa).

(2R)-2-phosphoglycerate is bound at residue Gln-162. Glu-204 serves as the catalytic Proton donor. Residues Asp-241, Glu-284, and Asp-311 each coordinate Mg(2+). Lys-336, Arg-365, Ser-366, and Lys-387 together coordinate (2R)-2-phosphoglycerate. Lys-336 acts as the Proton acceptor in catalysis.

Belongs to the enolase family. Requires Mg(2+) as cofactor.

The protein localises to the cytoplasm. It localises to the secreted. It is found in the cell surface. The enzyme catalyses (2R)-2-phosphoglycerate = phosphoenolpyruvate + H2O. It functions in the pathway carbohydrate degradation; glycolysis; pyruvate from D-glyceraldehyde 3-phosphate: step 4/5. In terms of biological role, catalyzes the reversible conversion of 2-phosphoglycerate (2-PG) into phosphoenolpyruvate (PEP). It is essential for the degradation of carbohydrates via glycolysis. This is Enolase from Sinorhizobium medicae (strain WSM419) (Ensifer medicae).